An 83-amino-acid chain; its full sequence is Small ribosomal subunit protein eS21 (83 aa).

Belongs to the eukaryotic ribosomal protein eS21 family. Component of the 40S small ribosomal subunit.

Its subcellular location is the cytoplasm. The protein localises to the cytosol. It localises to the rough endoplasmic reticulum. The chain is Small ribosomal subunit protein eS21 (RpS21) from Ixodes scapularis (Black-legged tick).